Reading from the N-terminus, the 616-residue chain is MALLQISEPGLSAAPHQRRLAAGIDLGTTNSLVATVRSGQAETLPDHEGRHLLPSVVHYQQQGHTVGYAARDNAAQDTANTISSVKRMMGRSLADIQARYPHLPYRFKASVNGLPMIDTAAGLLNPVRVSADILKALAARASESLSGELDGVVITVPAYFDDAQRQGTKDAARLAGLHVLRLLNEPTAAAIAYGLDSGKEGVIAVYDLGGGTFDISILRLSRGVFEVLATGGDSALGGDDFDHLLADYIREQAGIADRSDNRVQRELLDAAIAAKIALSDADTVRVNVAGWQGEITREQFNDLISALVKRTLLACRRALKDAGVDPQDVLEVVMVGGSTRVPLVRERVGEFFGRTPLTAIDPDKVVAIGAAIQADILVGNKPDSEMLLLDVIPLSLGLETMGGLVEKVIPRNTTIPVARAQDFTTFKDGQTAMSIHVMQGERELVQDCRSLARFALRGIPPLPAGGAHIRVTFQVDADGLLSVTAMEKSTGVEASIQVKPSYGLTDGEIASMIKDSMSFAEQDVKARMLAEQKVEAARVLESLTGALTADAALLSAAERQCIDDAAAHLSAVAQGDDVDAIEQAIKNVDKQTQEFAARRMDQSVRRALKGHSVDEV.

It belongs to the heat shock protein 70 family.

In terms of biological role, chaperone involved in the maturation of iron-sulfur cluster-containing proteins. Has a low intrinsic ATPase activity which is markedly stimulated by HscB. Involved in the maturation of IscU. In Salmonella enteritidis PT4 (strain P125109), this protein is Chaperone protein HscA.